We begin with the raw amino-acid sequence, 205 residues long: Pyrrolidone-carboxylate peptidase (205 aa).

Residues Glu78, Cys141, and His165 contribute to the active site.

This sequence belongs to the peptidase C15 family. As to quaternary structure, homotetramer.

Its subcellular location is the cytoplasm. It carries out the reaction Release of an N-terminal pyroglutamyl group from a polypeptide, the second amino acid generally not being Pro.. In terms of biological role, removes 5-oxoproline from various penultimate amino acid residues except L-proline. The sequence is that of Pyrrolidone-carboxylate peptidase from Thermosipho africanus (strain TCF52B).